A 395-amino-acid chain; its full sequence is Ribosomal RNA small subunit methyltransferase H (395 aa).

S-adenosyl-L-methionine is bound by residues 101–103, aspartate 120, tyrosine 147, aspartate 171, and glutamine 178; that span reads GGH.

This sequence belongs to the methyltransferase superfamily. RsmH family.

Its subcellular location is the cytoplasm. It catalyses the reaction cytidine(1402) in 16S rRNA + S-adenosyl-L-methionine = N(4)-methylcytidine(1402) in 16S rRNA + S-adenosyl-L-homocysteine + H(+). Its function is as follows. Specifically methylates the N4 position of cytidine in position 1402 (C1402) of 16S rRNA. The chain is Ribosomal RNA small subunit methyltransferase H from Mycobacterium marinum (strain ATCC BAA-535 / M).